The primary structure comprises 147 residues: Large ribosomal subunit protein uL13 (147 aa).

This sequence belongs to the universal ribosomal protein uL13 family. Part of the 50S ribosomal subunit.

This protein is one of the early assembly proteins of the 50S ribosomal subunit, although it is not seen to bind rRNA by itself. It is important during the early stages of 50S assembly. This is Large ribosomal subunit protein uL13 from Corynebacterium glutamicum (strain R).